The sequence spans 20 residues: Poneritoxin (20 aa).

Methionine sulfoxide; in form U1-PONTX-Dq3c is present on M18. K19 is subject to Lysine amide; in form U1-PONTX-Dq3a and U1-PONTX-Dq3c.

The peptide spanning residues 2 to 19 occurs in 3 forms and has been given 3 different names. U1-PONTX-Dq3a has an amidated Lys-19, U1-PONTX-Dq3c has an amidated Lys-19 and an oxidized Met-18, and U1-PONTX-Dq3b has no modifications at either Met-18 or Lys-19. Expressed by the venom gland.

The protein resides in the secreted. In terms of biological role, may have antimicrobial properties, like most ant linear peptides. This Dinoponera quadriceps (South American ant) protein is Poneritoxin.